A 268-amino-acid polypeptide reads, in one-letter code: Chymotrypsin-C (268 aa).

Positions 1-16 (MLGITVLAAILACASS) are cleaved as a signal peptide. Residues 17–29 (CGDPTFPPNLSAR) constitute a propeptide, activation peptide. 5 disulfides stabilise this stretch: Cys17/Cys141, Cys59/Cys75, Cys155/Cys222, Cys186/Cys202, and Cys212/Cys243. Asn25 carries N-linked (GlcNAc...) asparagine glycosylation. The region spanning 30-267 (VVGGEDAVPN…YIDWIKEKIQ (238 aa)) is the Peptidase S1 domain. Residue His74 is the Charge relay system of the active site. N-linked (GlcNAc...) asparagine glycosylation is found at Asn79 and Asn90. Asp121 functions as the Charge relay system in the catalytic mechanism. N-linked (GlcNAc...) asparagine glycosylation is present at Asn182. The active-site Charge relay system is Ser216.

It belongs to the peptidase S1 family. Elastase subfamily.

It catalyses the reaction Preferential cleavage: Leu-|-Xaa, Tyr-|-Xaa, Phe-|-Xaa, Met-|-Xaa, Trp-|-Xaa, Gln-|-Xaa, Asn-|-Xaa.. In terms of biological role, regulates activation and degradation of trypsinogens and procarboxypeptidases by targeting specific cleavage sites within their zymogen precursors. Has chymotrypsin-type protease activity and hypocalcemic activity. Cleaves TRY4 and TRY5 and thereby inhibits their autoactivation. This is Chymotrypsin-C (Ctrc) from Mus musculus (Mouse).